We begin with the raw amino-acid sequence, 177 residues long: Alkyl hydroperoxide reductase AhpD (177 aa).

Residue C131 is the Proton donor of the active site. A disulfide bridge connects residues C131 and C134. The Cysteine sulfenic acid (-SOH) intermediate role is filled by C134.

This sequence belongs to the AhpD family.

It catalyses the reaction N(6)-[(R)-dihydrolipoyl]-L-lysyl-[lipoyl-carrier protein] + a hydroperoxide = N(6)-[(R)-lipoyl]-L-lysyl-[lipoyl-carrier protein] + an alcohol + H2O. Antioxidant protein with alkyl hydroperoxidase activity. Required for the reduction of the AhpC active site cysteine residues and for the regeneration of the AhpC enzyme activity. The polypeptide is Alkyl hydroperoxide reductase AhpD (Solibacter usitatus (strain Ellin6076)).